A 690-amino-acid chain; its full sequence is MPYLHRSLRPQPQPVPGDARTIHSSGQSFEQLRQGCLQSGTLFEDADFPASNVSLFYSERPQVPFVWKRPGEIVEKPEFILGGATRTDICQGELGDCWLLAAIASLTLNQKALTRVVPQDQGFGSGYAGIFHFQFWQHSEWLDVVIDDRLPTFKDRLVFLHSADHNEFWSALLEKAYAKLNGSYEALKGGSAIEAMEDFTGGVAENFQIREAPEDFFEILEKALKRGSLLGCSIDTLNASESEARTSLGLIKGHAYTVTGLDQVNFHGQRIKLIRVRNPWGQVEWNGPWSDSSPEWRSVDLEEQKRLGHTALDDGEFWMAFKDFKIHFDKVEICNLTPDALEDSALHRWEVTIHQGSWVRGSTAGGCRNFLDTFWTNPQIKLSLTERDEGQEGCTFLAALMQKDRRRLKRFGANMLTIGYAIYQCPDKDGHLSRDFFRYHASLARSKTFINLREVSERFQLPPGDYILIPSTFEPHQEADFCLRIFSEKRAVTRDLDENIDIDLPELPKPTPQEEETEEEQQFRALFQRVAGEDMEVSAEELEYVLNAVLQKKTALKFKRLSLLSCRNIISLMDTSGNGKLEFEEFRVFWDKLKHWMDLFLQFDVDKSGTMSSYELRTALKAAGFQLGGHLLQLIVLRYADEDLQLDFDDYLNCLVRLENASRVFQSLSVKNKDFIHLNINEFISLTMNI.

A disordered region spans residues 1-23 (MPYLHRSLRPQPQPVPGDARTIH). The Calpain catalytic domain maps to 42-337 (LFEDADFPAS…FDKVEICNLT (296 aa)). The Ca(2+) site is built by Leu-81, Gly-83, and Asp-88. The active site involves Cys-97. Ca(2+) is bound at residue Glu-167. Residues His-254 and Asn-278 contribute to the active site. The Ca(2+) site is built by Glu-284, Asp-291, Leu-312, Asp-314, and Glu-316. The segment at 338-521 (PDALEDSALH…PQEEETEEEQ (184 aa)) is domain III. EF-hand domains are found at residues 518-552 (EEEQ…VLQK), 561-589 (LSLL…FRVF), and 591-626 (DKLK…AGFQ). The interval 522–690 (QFRALFQRVA…NEFISLTMNI (169 aa)) is domain IV. The Ca(2+) site is built by Asp-574, Ser-576, Asn-578, Lys-580, Glu-585, Asp-604, Asp-606, Ser-608, Thr-610, and Glu-615.

It belongs to the peptidase C2 family. Predominantly expressed in stomach and small intestine, although low levels of expression in other organs.

Its subcellular location is the cytoplasm. Calcium-regulated non-lysosomal thiol-protease. This is Calpain-9 (Capn9) from Mus musculus (Mouse).